The chain runs to 269 residues: Expansin-A32 (269 aa).

An N-terminal signal peptide occupies residues 1-25 (MWCTWALGRVVLAVVFLVALAAGDA). The Expansin-like EG45 domain maps to 60–174 (DGACGYKDTS…RRVPCVKVGG (115 aa)). The region spanning 184–264 (YFNLVMVSNV…DWQFGVTYQA (81 aa)) is the Expansin-like CBD domain.

Belongs to the expansin family. Expansin A subfamily.

The protein resides in the secreted. It is found in the cell wall. The protein localises to the membrane. Functionally, may cause loosening and extension of plant cell walls by disrupting non-covalent bonding between cellulose microfibrils and matrix glucans. No enzymatic activity has been found. May be required for rapid internodal elongation in deepwater rice during submergence. The protein is Expansin-A32 (EXPA32) of Oryza sativa subsp. japonica (Rice).